The sequence spans 1112 residues: DNA repair protein rad13 (1112 aa).

Residues M1–R95 form an N-domain region. Mg(2+) contacts are provided by D30 and D77. A UIM domain is found at T395 to S414. An I-domain region spans residues K742–P870. Mg(2+) is bound by residues E777, E779, D798, D800, and D849. A disordered region spans residues K1056–K1112. The span at T1079–I1089 shows a compositional bias: polar residues.

Belongs to the XPG/RAD2 endonuclease family. XPG subfamily. Mg(2+) is required as a cofactor.

The protein localises to the nucleus. Functionally, single-stranded DNA endonuclease involved in excision repair of DNA damaged with UV light, bulky adducts, or cross-linking agents. Essential for the incision step of excision-repair. The polypeptide is DNA repair protein rad13 (rad13) (Schizosaccharomyces pombe (strain 972 / ATCC 24843) (Fission yeast)).